Reading from the N-terminus, the 348-residue chain is MKAVIADGQNGVEVISDAPKPTPEKGEFLGRVIRVAFNPIDWKTLYNASIEKGTVGGTDFVAVVEDVGEGVDRSKYIGATVSGWAPGPLDGSNAAWREYITLDVNLVYFVPKNITPSQAATLPLTFTTASQGLNQYLGLPLPPTDGSKNSAQQKWVLVWSGSSSVGQYVVQLAHHAGYKVIATCSPHNFDWIKKLGADFTVDYHDPNVVEIIKKATDDSVFYGFDAASFPETSTLAVKAFSSKVKDGKLINILSSPPSPRSEVKIIGIIDYSLFNREFNFFGNKIEPIQASYDHAVEVYKKLTGWLQEGVIIPNRVKEFDGGLQAIPKALREFASGKHSAVKFVVRID.

Belongs to the zinc-containing alcohol dehydrogenase family. Quinone oxidoreductase subfamily.

Its subcellular location is the mitochondrion. In Schizosaccharomyces pombe (strain 972 / ATCC 24843) (Fission yeast), this protein is Zinc-type alcohol dehydrogenase-like protein C2E1P3.01.